Reading from the N-terminus, the 240-residue chain is DNA repair protein RecO (240 aa).

The protein belongs to the RecO family.

In terms of biological role, involved in DNA repair and RecF pathway recombination. The protein is DNA repair protein RecO of Actinobacillus pleuropneumoniae serotype 3 (strain JL03).